Here is a 787-residue protein sequence, read N- to C-terminus: Longitudinals lacking protein, isoforms A/B/D/L (787 aa).

In terms of domain architecture, BTB spans 32–97; it reads VDCTLAAEGK…MYRGEVNISQ (66 aa). 4 disordered regions span residues 115–200, 228–340, 506–560, and 653–677; these read LSDN…SSVL, SSGP…ASAS, AKDV…SGGK, and TTGSGQSPSNSGHNNSAGGGSSVLG. Low complexity-rich tracts occupy residues 162 to 175, 228 to 251, 263 to 293, 329 to 340, 537 to 560, and 659 to 668; these read SGDVSGSREGSSSP, SSGPAAGTSSQASSTQQQQPLTST, TSSTAAPASGASASAAVQQAHLHQQQAQTTS, NSATGPNPASAS, HSSSNHSSNGNGSGKPTKTSSGGK, and SPSNSGHNNS. Residues 685 to 707 form a C2H2-type 1; degenerate zinc finger; sequence HPCPVCGRVYKLKSSLRNHQKWE. A C2H2-type 2 zinc finger spans residues 714 to 737; it reads FQCPFCVYRAKQKMHIGRHMERMH.

As to quaternary structure, isoform D interacts with JIL-1. In terms of tissue distribution, by stage 11, isoform B is expressed throughout the mesoderm, whereas isoform A, isoform D and isoform L are expressed throughout the ectoderm. Expression becomes restricted during later stages; starting from stage 14 to 16, isoform B is expressed in muscle. Isoform A, isoform D, and at low levels isoform B, are expressed in the CNS. Expression is also seen in specific types of cells in the embryo; isoform A and isoform L are expressed in a dynamic pattern in the ventral neurogenic region starting at stage 7. Isoform L is expressed around the tracheal pits at stage 11.

The protein resides in the nucleus. Functionally, putative transcription factor required for axon growth and guidance in the central and peripheral nervous systems. Repels CNS axons away from the midline by promoting the expression of the midline repellent sli and its receptor robo. This Drosophila melanogaster (Fruit fly) protein is Longitudinals lacking protein, isoforms A/B/D/L.